A 247-amino-acid chain; its full sequence is Oil body-associated protein 2B (247 aa).

The segment at methionine 1–threonine 28 is disordered.

It belongs to the OBAP family.

The chain is Oil body-associated protein 2B from Arabidopsis thaliana (Mouse-ear cress).